Consider the following 426-residue polypeptide: Phosphomethylpyrimidine synthase (426 aa).

Residues asparagine 65, methionine 94, tyrosine 123, histidine 162, 184-186 (SRG), 225-228 (DGLR), and glutamate 264 contribute to the substrate site. Histidine 268 contacts Zn(2+). Tyrosine 291 serves as a coordination point for substrate. Histidine 332 contacts Zn(2+). Residues cysteine 409, cysteine 412, and cysteine 416 each contribute to the [4Fe-4S] cluster site.

This sequence belongs to the ThiC family. [4Fe-4S] cluster is required as a cofactor.

It catalyses the reaction 5-amino-1-(5-phospho-beta-D-ribosyl)imidazole + S-adenosyl-L-methionine = 4-amino-2-methyl-5-(phosphooxymethyl)pyrimidine + CO + 5'-deoxyadenosine + formate + L-methionine + 3 H(+). It functions in the pathway cofactor biosynthesis; thiamine diphosphate biosynthesis. Functionally, catalyzes the synthesis of the hydroxymethylpyrimidine phosphate (HMP-P) moiety of thiamine from aminoimidazole ribotide (AIR) in a radical S-adenosyl-L-methionine (SAM)-dependent reaction. The chain is Phosphomethylpyrimidine synthase from Thermodesulfovibrio yellowstonii (strain ATCC 51303 / DSM 11347 / YP87).